The sequence spans 274 residues: Phosphatidylglycerol--prolipoprotein diacylglyceryl transferase (274 aa).

4 helical membrane passes run 19–39, 59–79, 93–113, and 120–140; these read VGSV…VLGL, LAIW…VLFQ, IWRG…AALI, and VSFW…QAIG. A 1,2-diacyl-sn-glycero-3-phospho-(1'-sn-glycerol) is bound at residue arginine 141. The next 3 membrane-spanning stretches (helical) occupy residues 181 to 201, 209 to 229, and 243 to 263; these read TFLY…ALFF, GTIF…IEGL, and QVVS…LYLL.

It belongs to the Lgt family.

Its subcellular location is the cell inner membrane. The enzyme catalyses L-cysteinyl-[prolipoprotein] + a 1,2-diacyl-sn-glycero-3-phospho-(1'-sn-glycerol) = an S-1,2-diacyl-sn-glyceryl-L-cysteinyl-[prolipoprotein] + sn-glycerol 1-phosphate + H(+). It functions in the pathway protein modification; lipoprotein biosynthesis (diacylglyceryl transfer). Its function is as follows. Catalyzes the transfer of the diacylglyceryl group from phosphatidylglycerol to the sulfhydryl group of the N-terminal cysteine of a prolipoprotein, the first step in the formation of mature lipoproteins. In Acaryochloris marina (strain MBIC 11017), this protein is Phosphatidylglycerol--prolipoprotein diacylglyceryl transferase.